The chain runs to 177 residues: Large ribosomal subunit protein uL6 (177 aa).

Belongs to the universal ribosomal protein uL6 family. Part of the 50S ribosomal subunit.

In terms of biological role, this protein binds to the 23S rRNA, and is important in its secondary structure. It is located near the subunit interface in the base of the L7/L12 stalk, and near the tRNA binding site of the peptidyltransferase center. The chain is Large ribosomal subunit protein uL6 from Tolumonas auensis (strain DSM 9187 / NBRC 110442 / TA 4).